The chain runs to 184 residues: ATP synthase subunit b, chloroplastic (184 aa).

The helical transmembrane segment at 27–49 threads the bilayer; sequence LATNPINLSVVFGVLIFFGKGVL.

The protein belongs to the ATPase B chain family. As to quaternary structure, F-type ATPases have 2 components, F(1) - the catalytic core - and F(0) - the membrane proton channel. F(1) has five subunits: alpha(3), beta(3), gamma(1), delta(1), epsilon(1). F(0) has four main subunits: a(1), b(1), b'(1) and c(10-14). The alpha and beta chains form an alternating ring which encloses part of the gamma chain. F(1) is attached to F(0) by a central stalk formed by the gamma and epsilon chains, while a peripheral stalk is formed by the delta, b and b' chains.

Its subcellular location is the plastid. The protein localises to the chloroplast thylakoid membrane. In terms of biological role, f(1)F(0) ATP synthase produces ATP from ADP in the presence of a proton or sodium gradient. F-type ATPases consist of two structural domains, F(1) containing the extramembraneous catalytic core and F(0) containing the membrane proton channel, linked together by a central stalk and a peripheral stalk. During catalysis, ATP synthesis in the catalytic domain of F(1) is coupled via a rotary mechanism of the central stalk subunits to proton translocation. Component of the F(0) channel, it forms part of the peripheral stalk, linking F(1) to F(0). The sequence is that of ATP synthase subunit b, chloroplastic from Olimarabidopsis pumila (Dwarf rocket).